A 248-amino-acid chain; its full sequence is Coproheme decarboxylase (248 aa).

Fe-coproporphyrin III contacts are provided by residues R130, 144 to 148 (YPMDK), H171, Q184, and S222. Y144 is a catalytic residue.

Belongs to the ChdC family. Type 1 subfamily. It depends on Fe-coproporphyrin III as a cofactor.

The enzyme catalyses Fe-coproporphyrin III + 2 H2O2 + 2 H(+) = heme b + 2 CO2 + 4 H2O. The catalysed reaction is Fe-coproporphyrin III + H2O2 + H(+) = harderoheme III + CO2 + 2 H2O. It carries out the reaction harderoheme III + H2O2 + H(+) = heme b + CO2 + 2 H2O. It participates in porphyrin-containing compound metabolism; protoheme biosynthesis. Involved in coproporphyrin-dependent heme b biosynthesis. Catalyzes the decarboxylation of Fe-coproporphyrin III (coproheme) to heme b (protoheme IX), the last step of the pathway. The reaction occurs in a stepwise manner with a three-propionate intermediate. In Geobacillus sp. (strain WCH70), this protein is Coproheme decarboxylase.